We begin with the raw amino-acid sequence, 108 residues long: Integration host factor subunit alpha (108 aa).

It belongs to the bacterial histone-like protein family. As to quaternary structure, heterodimer of an alpha and a beta chain.

This protein is one of the two subunits of integration host factor, a specific DNA-binding protein that functions in genetic recombination as well as in transcriptional and translational control. The protein is Integration host factor subunit alpha of Rhodopseudomonas palustris (strain BisB18).